The primary structure comprises 117 residues: Large ribosomal subunit protein uL18 (117 aa).

Belongs to the universal ribosomal protein uL18 family. Part of the 50S ribosomal subunit; part of the 5S rRNA/L5/L18/L25 subcomplex. Contacts the 5S and 23S rRNAs.

In terms of biological role, this is one of the proteins that bind and probably mediate the attachment of the 5S RNA into the large ribosomal subunit, where it forms part of the central protuberance. The protein is Large ribosomal subunit protein uL18 of Actinobacillus pleuropneumoniae serotype 5b (strain L20).